The chain runs to 394 residues: Elongation factor Tu (394 aa).

The tr-type G domain maps to 10 to 204 (KPHVNVGTIG…YLDSYIPEPE (195 aa)). The G1 stretch occupies residues 19–26 (GHVDHGKT). 19 to 26 (GHVDHGKT) is a binding site for GTP. Position 26 (Thr26) interacts with Mg(2+). The G2 stretch occupies residues 60-64 (GITIN). Positions 81–84 (DCPG) are G3. Residues 81–85 (DCPGH) and 136–139 (NKCD) contribute to the GTP site. A G4 region spans residues 136–139 (NKCD). The segment at 174–176 (SAL) is G5.

The protein belongs to the TRAFAC class translation factor GTPase superfamily. Classic translation factor GTPase family. EF-Tu/EF-1A subfamily. In terms of assembly, monomer.

Its subcellular location is the cytoplasm. The enzyme catalyses GTP + H2O = GDP + phosphate + H(+). Functionally, GTP hydrolase that promotes the GTP-dependent binding of aminoacyl-tRNA to the A-site of ribosomes during protein biosynthesis. The protein is Elongation factor Tu of Enterobacter sp. (strain 638).